The following is a 415-amino-acid chain: Serine hydroxymethyltransferase 1 (415 aa).

(6S)-5,6,7,8-tetrahydrofolate is bound by residues leucine 122 and 126–128 (GHL). The residue at position 230 (lysine 230) is an N6-(pyridoxal phosphate)lysine.

It belongs to the SHMT family. As to quaternary structure, homodimer. The cofactor is pyridoxal 5'-phosphate.

It is found in the cytoplasm. The enzyme catalyses (6R)-5,10-methylene-5,6,7,8-tetrahydrofolate + glycine + H2O = (6S)-5,6,7,8-tetrahydrofolate + L-serine. The protein operates within one-carbon metabolism; tetrahydrofolate interconversion. Its pathway is amino-acid biosynthesis; glycine biosynthesis; glycine from L-serine: step 1/1. Its function is as follows. Catalyzes the reversible interconversion of serine and glycine with tetrahydrofolate (THF) serving as the one-carbon carrier. This reaction serves as the major source of one-carbon groups required for the biosynthesis of purines, thymidylate, methionine, and other important biomolecules. Also exhibits THF-independent aldolase activity toward beta-hydroxyamino acids, producing glycine and aldehydes, via a retro-aldol mechanism. The sequence is that of Serine hydroxymethyltransferase 1 from Ralstonia nicotianae (strain ATCC BAA-1114 / GMI1000) (Ralstonia solanacearum).